A 60-amino-acid polypeptide reads, in one-letter code: Large ribosomal subunit protein uL30 (60 aa).

The protein belongs to the universal ribosomal protein uL30 family. In terms of assembly, part of the 50S ribosomal subunit.

The sequence is that of Large ribosomal subunit protein uL30 from Oceanobacillus iheyensis (strain DSM 14371 / CIP 107618 / JCM 11309 / KCTC 3954 / HTE831).